The sequence spans 314 residues: Endo-beta-N-acetylglucosaminidase (314 aa).

The N-terminal stretch at 1 to 47 (MQFGIVAAIADGGRTARAGGSVRPPRRPPASHTAWGLPRGRPTGQPH) is a signal peptide. The segment at 14–54 (RTARAGGSVRPPRRPPASHTAWGLPRGRPTGQPHATPTKSG) is disordered. The region spanning 55 to 309 (PTSIAYVEVN…SSMTKVLYGQ (255 aa)) is the GH18 domain. Glu175 (proton donor) is an active-site residue.

The protein belongs to the glycosyl hydrolase 18 family. Monomer.

Its subcellular location is the secreted. The enzyme catalyses an N(4)-(oligosaccharide-(1-&gt;3)-[oligosaccharide-(1-&gt;6)]-beta-D-Man-(1-&gt;4)-beta-D-GlcNAc-(1-&gt;4)-alpha-D-GlcNAc)-L-asparaginyl-[protein] + H2O = an oligosaccharide-(1-&gt;3)-[oligosaccharide-(1-&gt;6)]-beta-D-Man-(1-&gt;4)-D-GlcNAc + N(4)-(N-acetyl-beta-D-glucosaminyl)-L-asparaginyl-[protein]. In terms of biological role, cleaves asparagine-linked oligomannose and hybrid, but not complex, oligosaccharides from glycoproteins. The sequence is that of Endo-beta-N-acetylglucosaminidase from Flavobacterium sp. (strain SK1022).